The primary structure comprises 391 residues: Pyridinium-3,5-bisthiocarboxylic acid mononucleotide nickel insertion protein (391 aa).

It belongs to the LarC family.

The enzyme catalyses Ni(II)-pyridinium-3,5-bisthiocarboxylate mononucleotide = pyridinium-3,5-bisthiocarboxylate mononucleotide + Ni(2+). In terms of biological role, involved in the biosynthesis of a nickel-pincer cofactor ((SCS)Ni(II) pincer complex). Binds Ni(2+), and functions in nickel delivery to pyridinium-3,5-bisthiocarboxylic acid mononucleotide (P2TMN), to form the mature cofactor. Is thus probably required for the activation of nickel-pincer cofactor-dependent enzymes. This chain is Pyridinium-3,5-bisthiocarboxylic acid mononucleotide nickel insertion protein, found in Staphylococcus saprophyticus subsp. saprophyticus (strain ATCC 15305 / DSM 20229 / NCIMB 8711 / NCTC 7292 / S-41).